A 440-amino-acid polypeptide reads, in one-letter code: C-terminal-binding protein 1 (440 aa).

An interaction with GLIS2 1 region spans residues 1-70 (MGSSHLLNKG…EIHEKVLNEA (70 aa)). NAD(+) is bound by residues serine 100, 180–185 (IGLGRV), aspartate 204, 237–243 (CGLNEHN), 264–266 (TAR), and aspartate 290. The active site involves arginine 266. The segment at 288–360 (ALDVHESEPF…VNKDHLTAAT (73 aa)) is interaction with GLIS2 2. Residue glutamate 295 is part of the active site. Phosphoserine is present on serine 300. Histidine 315 serves as the catalytic Proton donor. 315–318 (HAAW) lines the NAD(+) pocket. The interval 408 to 440 (SHGLPPVAHPPHAPSPGQTVKPEADRDHASDQL) is disordered. The residue at position 422 (serine 422) is a Phosphoserine; by HIPK2. A Glycyl lysine isopeptide (Lys-Gly) (interchain with G-Cter in SUMO) cross-link involves residue lysine 428. Over residues 429-440 (PEADRDHASDQL) the composition is skewed to basic and acidic residues.

Belongs to the D-isomer specific 2-hydroxyacid dehydrogenase family. As to quaternary structure, homo- or heterodimer. Heterodimer with CTBP2. Interacts with PRDM16; the interaction represses white adipose tissue (WAT)-specific genes expression. Interacts with GLIS2, FOXP2, HDAC4, HDAC5, HDAC9 and ZNF217. Interacts with ELK3 (via its PXDLS motif). Interacts with RBBP8 (via its PXDLS motif); the interaction is disrupted by binding to adenovirus E1A. Interacts with FOXP1, HIPK2, PNN, NRIP1, MECOM, ZFHX1B and WIZ. Interacts with ZNF366 (via PXDLS motif). Interaction with SATB1 (non-acetylated form); the interaction stabilizes its attachment to DNA and promotes transcription repression. Interacts with BCL6; the interaction is required for BCL6 transcriptional autoinhibition and inhibition of some BCL6 target genes. Interacts with IKZF4. Interacts with MCRIP1 (unphosphorylated form, via the PXDLS motif); competitively inhibiting CTBP-ZEB1 interaction. Interacts with Bassoon/BSN; this interaction targets and anchors CTBP1 to presynapses. Interacts with SIMC1. In terms of assembly, (Microbial infection) Interacts with Epstein-Barr virus EBNA3. Interacts with Epstein-Barr virus EBNA6; this interaction leads to gene repression, but also seems to interfere with the repressive function of CtBP pre-bound to DNA, leading to EBNA6 mediated up-regulation of many cellular genes. (Microbial infection) Interacts with adenovirus E1A protein (via its C-terminus); the interaction disrupts the interaction of CTBP1 with RBBP8. As to quaternary structure, (Microbial infection) Interacts with human adenovirus 5 E1A protein; this interaction seems to potentiate viral replication. NAD(+) is required as a cofactor. The level of phosphorylation appears to be regulated during the cell cycle. Phosphorylation by HIPK2 on Ser-422 induces proteasomal degradation. Post-translationally, ADP-ribosylated; when cells are exposed to brefeldin A. In terms of processing, sumoylation on Lys-428 is promoted by the E3 SUMO-protein ligase CBX4. As to expression, expressed in germinal center B-cells.

It localises to the cytoplasm. It is found in the nucleus. Corepressor targeting diverse transcription regulators such as GLIS2 or BCL6. Has dehydrogenase activity. Involved in controlling the equilibrium between tubular and stacked structures in the Golgi complex. Functions in brown adipose tissue (BAT) differentiation. This chain is C-terminal-binding protein 1 (CTBP1), found in Homo sapiens (Human).